The primary structure comprises 201 residues: 3-isopropylmalate dehydratase small subunit (201 aa).

The protein belongs to the LeuD family. LeuD type 1 subfamily. In terms of assembly, heterodimer of LeuC and LeuD.

The enzyme catalyses (2R,3S)-3-isopropylmalate = (2S)-2-isopropylmalate. It participates in amino-acid biosynthesis; L-leucine biosynthesis; L-leucine from 3-methyl-2-oxobutanoate: step 2/4. In terms of biological role, catalyzes the isomerization between 2-isopropylmalate and 3-isopropylmalate, via the formation of 2-isopropylmaleate. This is 3-isopropylmalate dehydratase small subunit from Shewanella pealeana (strain ATCC 700345 / ANG-SQ1).